A 194-amino-acid polypeptide reads, in one-letter code: Protein GrpE (194 aa).

This sequence belongs to the GrpE family. As to quaternary structure, homodimer.

The protein resides in the cytoplasm. Its function is as follows. Participates actively in the response to hyperosmotic and heat shock by preventing the aggregation of stress-denatured proteins, in association with DnaK and GrpE. It is the nucleotide exchange factor for DnaK and may function as a thermosensor. Unfolded proteins bind initially to DnaJ; upon interaction with the DnaJ-bound protein, DnaK hydrolyzes its bound ATP, resulting in the formation of a stable complex. GrpE releases ADP from DnaK; ATP binding to DnaK triggers the release of the substrate protein, thus completing the reaction cycle. Several rounds of ATP-dependent interactions between DnaJ, DnaK and GrpE are required for fully efficient folding. This is Protein GrpE from Aliivibrio salmonicida (strain LFI1238) (Vibrio salmonicida (strain LFI1238)).